A 602-amino-acid polypeptide reads, in one-letter code: Exopolysaccharide phosphotransferase SCO2594 (602 aa).

The interval 251–271 (PRAGEDLDAGDGAAGGPRPGL) is disordered.

It belongs to the stealth family.

This chain is Exopolysaccharide phosphotransferase SCO2594, found in Streptomyces coelicolor (strain ATCC BAA-471 / A3(2) / M145).